The chain runs to 400 residues: Phosphoglycerate kinase (400 aa).

Residues Asp-19–Asn-21, Arg-38, His-61–Arg-64, Arg-124, and Arg-161 each bind substrate. Residues Lys-211, Gly-299, Glu-330, and Gly-356–Ser-359 each bind ATP.

It belongs to the phosphoglycerate kinase family. In terms of assembly, monomer.

It localises to the cytoplasm. The enzyme catalyses (2R)-3-phosphoglycerate + ATP = (2R)-3-phospho-glyceroyl phosphate + ADP. Its pathway is carbohydrate degradation; glycolysis; pyruvate from D-glyceraldehyde 3-phosphate: step 2/5. The sequence is that of Phosphoglycerate kinase from Frankia alni (strain DSM 45986 / CECT 9034 / ACN14a).